The sequence spans 612 residues: Methionine--tRNA ligase (612 aa).

The 'HIGH' region motif lies at 12-22 (PYANGPRHIGH). Cys144, Cys147, Cys157, and Cys160 together coordinate Zn(2+). A 'KMSKS' region motif is present at residues 350 to 354 (KFSSS). An ATP-binding site is contributed by Ser353. The disordered stretch occupies residues 580 to 612 (IQPGTQLSKPKPLFPKLDPELAETGPEWAPVQK).

The protein belongs to the class-I aminoacyl-tRNA synthetase family. MetG type 1 subfamily. In terms of assembly, monomer. The cofactor is Zn(2+).

Its subcellular location is the cytoplasm. The enzyme catalyses tRNA(Met) + L-methionine + ATP = L-methionyl-tRNA(Met) + AMP + diphosphate. In terms of biological role, is required not only for elongation of protein synthesis but also for the initiation of all mRNA translation through initiator tRNA(fMet) aminoacylation. This Corynebacterium jeikeium (strain K411) protein is Methionine--tRNA ligase.